Consider the following 355-residue polypeptide: Protein RecA (355 aa).

72–79 serves as a coordination point for ATP; sequence GPESSGKT.

This sequence belongs to the RecA family.

The protein localises to the cytoplasm. Its function is as follows. Can catalyze the hydrolysis of ATP in the presence of single-stranded DNA, the ATP-dependent uptake of single-stranded DNA by duplex DNA, and the ATP-dependent hybridization of homologous single-stranded DNAs. It interacts with LexA causing its activation and leading to its autocatalytic cleavage. In Wolbachia sp. subsp. Drosophila simulans (strain wRi), this protein is Protein RecA.